Consider the following 91-residue polypeptide: CRISPR-associated endoribonuclease Cas2 2 (91 aa).

Asp10 contributes to the Mg(2+) binding site.

This sequence belongs to the CRISPR-associated endoribonuclease Cas2 protein family. In terms of assembly, homodimer, forms a heterotetramer with a Cas1 homodimer. The cofactor is Mg(2+).

Its function is as follows. CRISPR (clustered regularly interspaced short palindromic repeat), is an adaptive immune system that provides protection against mobile genetic elements (viruses, transposable elements and conjugative plasmids). CRISPR clusters contain sequences complementary to antecedent mobile elements and target invading nucleic acids. CRISPR clusters are transcribed and processed into CRISPR RNA (crRNA). Functions as a ssRNA-specific endoribonuclease. Involved in the integration of spacer DNA into the CRISPR cassette. The protein is CRISPR-associated endoribonuclease Cas2 2 of Thermodesulfovibrio yellowstonii (strain ATCC 51303 / DSM 11347 / YP87).